We begin with the raw amino-acid sequence, 176 residues long: Adenylyl-sulfate kinase (176 aa).

Position 12–19 (12–19 (GLSGAGKT)) interacts with ATP. Residue S86 is the Phosphoserine intermediate of the active site.

It belongs to the APS kinase family.

The catalysed reaction is adenosine 5'-phosphosulfate + ATP = 3'-phosphoadenylyl sulfate + ADP + H(+). It participates in sulfur metabolism; hydrogen sulfide biosynthesis; sulfite from sulfate: step 2/3. Catalyzes the synthesis of activated sulfate. This chain is Adenylyl-sulfate kinase, found in Synechococcus sp. (strain JA-3-3Ab) (Cyanobacteria bacterium Yellowstone A-Prime).